Consider the following 168-residue polypeptide: Phosphopantetheine adenylyltransferase (168 aa).

Substrate is bound at residue Thr-14. Residues 14-15 (TF) and His-22 contribute to the ATP site. 3 residues coordinate substrate: Lys-46, Leu-78, and Arg-92. Residues 93–95 (GLR), Glu-103, and 128–134 (YSFISSS) each bind ATP.

The protein belongs to the bacterial CoaD family. In terms of assembly, homohexamer. Requires Mg(2+) as cofactor.

Its subcellular location is the cytoplasm. It catalyses the reaction (R)-4'-phosphopantetheine + ATP + H(+) = 3'-dephospho-CoA + diphosphate. Its pathway is cofactor biosynthesis; coenzyme A biosynthesis; CoA from (R)-pantothenate: step 4/5. Its function is as follows. Reversibly transfers an adenylyl group from ATP to 4'-phosphopantetheine, yielding dephospho-CoA (dPCoA) and pyrophosphate. The polypeptide is Phosphopantetheine adenylyltransferase (Xanthomonas oryzae pv. oryzae (strain MAFF 311018)).